The chain runs to 63 residues: uncharacterized protein (63 aa).

A signal peptide spans 1-18 (MLNSEHFNLIQRALDATA).

This is an uncharacterized protein from Bacillus subtilis (strain 168).